We begin with the raw amino-acid sequence, 584 residues long: DNA ligase (584 aa).

Glu249 is an ATP binding site. The active-site N6-AMP-lysine intermediate is Lys251. ATP contacts are provided by Arg256, Arg271, Glu301, Phe341, Arg416, and Lys422.

This sequence belongs to the ATP-dependent DNA ligase family. Requires Mg(2+) as cofactor.

The enzyme catalyses ATP + (deoxyribonucleotide)n-3'-hydroxyl + 5'-phospho-(deoxyribonucleotide)m = (deoxyribonucleotide)n+m + AMP + diphosphate.. DNA ligase that seals nicks in double-stranded DNA during DNA replication, DNA recombination and DNA repair. The protein is DNA ligase of Pyrobaculum arsenaticum (strain DSM 13514 / JCM 11321 / PZ6).